Reading from the N-terminus, the 256-residue chain is Hemin import ATP-binding protein HmuV (256 aa).

The 237-residue stretch at 2–238 folds into the ABC transporter domain; it reads ISAQNLVYSL…QALTMLYGAD (237 aa). Position 34-41 (34-41) interacts with ATP; it reads GPNGAGKS.

It belongs to the ABC transporter superfamily. Heme (hemin) importer (TC 3.A.1.14.5) family. As to quaternary structure, the complex is composed of two ATP-binding proteins (HmuV), two transmembrane proteins (HmuU) and a solute-binding protein (HmuT).

The protein resides in the cell inner membrane. Functionally, part of the ABC transporter complex HmuTUV involved in hemin import. Responsible for energy coupling to the transport system. The protein is Hemin import ATP-binding protein HmuV of Shigella dysenteriae serotype 1 (strain Sd197).